Reading from the N-terminus, the 475-residue chain is Ribulose bisphosphate carboxylase large chain (475 aa).

Positions 1–2 (MS) are excised as a propeptide. At Pro-3 the chain carries N-acetylproline. Position 14 is an N6,N6,N6-trimethyllysine (Lys-14). Catalysis depends on Lys-175, which acts as the Proton acceptor. Positions 175 and 177 each coordinate D-ribulose 1,5-bisphosphate. Positions 201, 203, and 204 each coordinate Mg(2+). The residue at position 201 (Lys-201) is an N6-carboxylysine. A D-ribulose 1,5-bisphosphate-binding site is contributed by Glu-204. His-294 acts as the Proton acceptor in catalysis. Positions 295, 327, 334, 379, 381, 403, and 404 each coordinate D-ribulose 1,5-bisphosphate.

Belongs to the RuBisCO large chain family. Type I subfamily. As to quaternary structure, heterohexadecamer of 8 large chains and 8 small chains. Heterohexadecamer; disulfide-linked. The disulfide link is formed within the large subunit homodimers. It depends on Mg(2+) as a cofactor. In terms of processing, the disulfide bond which can form in the large chain dimeric partners within the hexadecamer appears to be associated with oxidative stress and protein turnover.

It is found in the plastid. The protein resides in the chloroplast. The catalysed reaction is 2 (2R)-3-phosphoglycerate + 2 H(+) = D-ribulose 1,5-bisphosphate + CO2 + H2O. It carries out the reaction D-ribulose 1,5-bisphosphate + O2 = 2-phosphoglycolate + (2R)-3-phosphoglycerate + 2 H(+). Its function is as follows. RuBisCO catalyzes two reactions: the carboxylation of D-ribulose 1,5-bisphosphate, the primary event in carbon dioxide fixation, as well as the oxidative fragmentation of the pentose substrate in the photorespiration process. Both reactions occur simultaneously and in competition at the same active site. Binds to abscisic acid (ABA); only half of the possible binding sites are occupied in the crystal and there are indications this is a low affinity site. The chain is Ribulose bisphosphate carboxylase large chain from Pisum sativum (Garden pea).